We begin with the raw amino-acid sequence, 306 residues long: Ribonuclease BN (306 aa).

Zn(2+)-binding residues include histidine 64, histidine 66, aspartate 68, histidine 69, histidine 141, aspartate 212, and histidine 270. The active-site Proton acceptor is the aspartate 68.

Belongs to the RNase Z family. RNase BN subfamily. Homodimer. The cofactor is Zn(2+).

Zinc phosphodiesterase, which has both exoribonuclease and endoribonuclease activities. The polypeptide is Ribonuclease BN (Klebsiella pneumoniae subsp. pneumoniae (strain ATCC 700721 / MGH 78578)).